Consider the following 1851-residue polypeptide: MQYHQHQHQFPGPGPSHTSVYSSDGFSCSMESIPLPEHLQQRNPPMEEHYLQQTILPTRVPESTVAKAREIVLSHITSQEHLPWDTFRLLPPKADRHQKDTLYNGFLQVLKMITFVALFVTTLGSSILAKLSLLVMAAGLGQAGHNISICPDKIPESPKNSVLISPKNAAKWAWALLLAICIPELLCFARSLHRSLFRKVRGPSFLQFLLVFTVESVHAFGLGALVFAIMPRGMVITMLQLGNSLCLIPSLLLPLSRSRSRWLPLLLLLDGSAILAQSSAAIWRGSIPLERFGFVFLCTSLISIAWWQNFVHPHSFLPATRFFAHYAAKLRECRSKTFVVLSPWKCLIFTFCMFQFVPPQIPFRELLQKDPFGEKLVTINAYNLNQSQLNAFQERMENLERKAFHQQHPHIVHPLKLNRKIVENIANGEAALFRNGTRRPPKKEEVKKNKMDSKKKTKKLKKKKGGNNNATSTNSSEKTPTKGGVLPTKRERRTMAATGSNERVEADYSSNSDADEQEEEEENVAAYNIYDDRVELNQFTTANDALWLVFVQAGSVLLCQLCAKFACKVVMQRVGLALPVVLSIPFGILFLAYSCRQKATNPCHLSEWMSKELFWQCPTRPFHWQRFFREQPNLLWLCWWLSQCWITIHLWLPRQERLAKSEKLFVLGYIDAPFPEHSIALDRRRDDKIQIRSEDIDTEEEANEGGGEQEDGNSSTHTCESAASGLVVVEAPFPKHPNVGRPTAASICSNGSLSSGSHRSDDGGLIRELPSSADSVCKIYVCATMWHESALEMGCMLKSIFRLDKDQCARRNAQRYLKVVDPDYYVFEAHIYIDDAFELDENGNPHPNKFVHQLLEKMDEAASTKLQLRTPRICVTSYGGRISYVLPWRNRLSIHLKNKLLIRQRKRWSQVMYLYFLLGFRLMLRVHEQKRRELLAENTFILTLDGDVDFQPECVHLLVDLMRKNRRLGAACGRIHPRGSGLMVWYQKFEYAVGHWLQKATEHMIGCVLCSPGCFSLFRSSALIDDNVARKYATKSEKPFHYVQYDQGEDRWLCTLLLQRGYRVEYCAASDALTFAPEGFSEFFNQRRRWIPSTMANVIDLLRDYRNVVRVNDSVSIWYIAYQLVMLFSSVLGPGTIFLMIVGAISISFNIDTRLALLIVTTPVLCFCVCCLTCGTETQLLLAQVIGALFAMLMTAVIVGTSLQIQKDGLLSPHSIFLFTVLGSWSFSALLHPLEFGCLLPCGLYFLAIPCMYMLLPVYSLCNLNTVSWGTRENASVSSSSTGQFSGKREERGDILPHLQKTEDGELSVGCGNFCRVVCCVRNPSSPPCADETVEVRKLDENFRKIERKLQSLERRTNGQGNNAEEEGKEEEETGKSEQERKEGREEGKEEEGKMSKRKKEEMDLKGWMELEPFRRFEPIVLDTEEESFWREMIEKYLRPILPNSNEQARIQRGLNELRNTCCSAFFMVNIVFIIVVLVLQLQKDCLHIEWPLGPLVNQTRVQCGGGGGRDFEGEEWIMSRLQLEPMGFVFIVFFLIILFIQFLAMLFHRFGTFTHIIASTELCCAQRPLDKLSEEELVAQNAVEIVRELQAIRGIDSSLSRSEQFQQQPLQRQTRQHFPRTLSLGKRQQNAQIPPRCEKGGNERGEESPTSLPAPPVINWSEVHRNHQRVQPMEGGQQFDPRKDTLDAAFRQRFFALSSSSIAADHHQNNGGHLVDTTGTGHIGAAALPLTLNRRTLRALEQRRNILYQRGDRKRIPALNQQFHSIFPSSSESEGEEGEGGGRGRGREQERDKCLEGKKEKFRQRVEEGPARCHRLEELFGKSRKGGPQKRGKVNGENMKFLGTTNKRAK.

A disordered region spans residues 1–21 (MQYHQHQHQFPGPGPSHTSVY). The Cytoplasmic segment spans residues 1–108 (MQYHQHQHQF…KDTLYNGFLQ (108 aa)). The helical transmembrane segment at 109-129 (VLKMITFVALFVTTLGSSILA) threads the bilayer. Residues 130-168 (KLSLLVMAAGLGQAGHNISICPDKIPESPKNSVLISPKN) lie on the Extracellular side of the membrane. Asn-146 is a glycosylation site (N-linked (GlcNAc...) asparagine). The chain crosses the membrane as a helical span at residues 169–189 (AAKWAWALLLAICIPELLCFA). At 190 to 208 (RSLHRSLFRKVRGPSFLQF) the chain is on the cytoplasmic side. Residues 209-229 (LLVFTVESVHAFGLGALVFAI) traverse the membrane as a helical segment. The Extracellular portion of the chain corresponds to 230–234 (MPRGM). The chain crosses the membrane as a helical span at residues 235–255 (VITMLQLGNSLCLIPSLLLPL). Residues 256-261 (SRSRSR) lie on the Cytoplasmic side of the membrane. Residues 262 to 282 (WLPLLLLLDGSAILAQSSAAI) traverse the membrane as a helical segment. Over 283–291 (WRGSIPLER) the chain is Extracellular. A helical membrane pass occupies residues 292 to 312 (FGFVFLCTSLISIAWWQNFVH). At 313 to 337 (PHSFLPATRFFAHYAAKLRECRSKT) the chain is on the cytoplasmic side. A helical membrane pass occupies residues 338 to 358 (FVVLSPWKCLIFTFCMFQFVP). The Extracellular portion of the chain corresponds to 359–544 (PQIPFRELLQ…ELNQFTTAND (186 aa)). 2 N-linked (GlcNAc...) asparagine glycosylation sites follow: Asn-385 and Asn-435. The tract at residues 432-522 (LFRNGTRRPP…DADEQEEEEE (91 aa)) is disordered. Residues 442-454 (KKEEVKKNKMDSK) show a composition bias toward basic and acidic residues. Positions 455–465 (KKTKKLKKKKG) are enriched in basic residues. The span at 466–478 (GNNNATSTNSSEK) shows a compositional bias: low complexity. Residues Asn-469 and Asn-474 are each glycosylated (N-linked (GlcNAc...) asparagine). Over residues 513–522 (DADEQEEEEE) the composition is skewed to acidic residues. Residues 545 to 565 (ALWLVFVQAGSVLLCQLCAKF) form a helical membrane-spanning segment. The Cytoplasmic portion of the chain corresponds to 566 to 573 (ACKVVMQR). The helical transmembrane segment at 574–594 (VGLALPVVLSIPFGILFLAYS) threads the bilayer. Residues 595 to 631 (CRQKATNPCHLSEWMSKELFWQCPTRPFHWQRFFREQ) are Extracellular-facing. A helical membrane pass occupies residues 632–652 (PNLLWLCWWLSQCWITIHLWL). Over 653 to 1124 (PRQERLAKSE…VSIWYIAYQL (472 aa)) the chain is Cytoplasmic. The segment at 693–718 (SEDIDTEEEANEGGGEQEDGNSSTHT) is disordered. Positions 696–711 (IDTEEEANEGGGEQED) are enriched in acidic residues. Residues 1125–1145 (VMLFSSVLGPGTIFLMIVGAI) form a helical membrane-spanning segment. At 1146–1154 (SISFNIDTR) the chain is on the extracellular side. Residues 1155 to 1175 (LALLIVTTPVLCFCVCCLTCG) traverse the membrane as a helical segment. The Cytoplasmic segment spans residues 1176-1179 (TETQ). A helical membrane pass occupies residues 1180-1200 (LLLAQVIGALFAMLMTAVIVG). The Extracellular segment spans residues 1201–1209 (TSLQIQKDG). The helical transmembrane segment at 1210–1230 (LLSPHSIFLFTVLGSWSFSAL) threads the bilayer. At 1231 to 1235 (LHPLE) the chain is on the cytoplasmic side. Residues 1236–1256 (FGCLLPCGLYFLAIPCMYMLL) form a helical membrane-spanning segment. Topologically, residues 1257–1461 (PVYSLCNLNT…QRGLNELRNT (205 aa)) are extracellular. N-linked (GlcNAc...) asparagine glycosylation is present at Asn-1274. The stretch at 1329–1383 (CADETVEVRKLDENFRKIERKLQSLERRTNGQGNNAEEEGKEEEETGKSEQERKE) forms a coiled coil. The disordered stretch occupies residues 1350-1402 (LQSLERRTNGQGNNAEEEGKEEEETGKSEQERKEGREEGKEEEGKMSKRKKEE). Acidic residues predominate over residues 1364-1373 (AEEEGKEEEE). Residues 1374–1402 (TGKSEQERKEGREEGKEEEGKMSKRKKEE) are compositionally biased toward basic and acidic residues. Residues 1462-1482 (CCSAFFMVNIVFIIVVLVLQL) traverse the membrane as a helical segment. Over 1483–1527 (QKDCLHIEWPLGPLVNQTRVQCGGGGGRDFEGEEWIMSRLQLEPM) the chain is Cytoplasmic. A helical membrane pass occupies residues 1528–1548 (GFVFIVFFLIILFIQFLAMLF). At 1549 to 1851 (HRFGTFTHII…FLGTTNKRAK (303 aa)) the chain is on the extracellular side. The segment at 1626–1658 (GKRQQNAQIPPRCEKGGNERGEESPTSLPAPPV) is disordered. The span at 1637-1648 (RCEKGGNERGEE) shows a compositional bias: basic and acidic residues. Asn-1660 carries N-linked (GlcNAc...) asparagine glycosylation. Positions 1765–1851 (HSIFPSSSES…FLGTTNKRAK (87 aa)) are disordered. Over residues 1781–1822 (GGGRGRGREQERDKCLEGKKEKFRQRVEEGPARCHRLEELFG) the composition is skewed to basic and acidic residues. Basic residues predominate over residues 1823–1834 (KSRKGGPQKRGK).

Belongs to the chitin synthase family. Class IV subfamily. In terms of processing, may require proteolytic cleavage for activation.

The protein localises to the cell membrane. It carries out the reaction [(1-&gt;4)-N-acetyl-beta-D-glucosaminyl](n) + UDP-N-acetyl-alpha-D-glucosamine = [(1-&gt;4)-N-acetyl-beta-D-glucosaminyl](n+1) + UDP + H(+). Functionally, required for the synthesis of chitin. The protein is Chitin synthase of Meloidogyne artiellia (British root-knot nematode).